The following is a 659-amino-acid chain: Ion-translocating oxidoreductase complex subunit C (659 aa).

4Fe-4S ferredoxin-type domains follow at residues 366-397 and 407-436; these read TEMG…QQLY and KARN…VQYY. [4Fe-4S] cluster is bound by residues Cys-377, Cys-380, Cys-383, Cys-387, Cys-416, Cys-419, Cys-422, and Cys-426.

The protein belongs to the 4Fe4S bacterial-type ferredoxin family. RnfC subfamily. The complex is composed of six subunits: RnfA, RnfB, RnfC, RnfD, RnfE and RnfG. The cofactor is [4Fe-4S] cluster.

Its subcellular location is the cell inner membrane. Functionally, part of a membrane-bound complex that couples electron transfer with translocation of ions across the membrane. The protein is Ion-translocating oxidoreductase complex subunit C of Yersinia pseudotuberculosis serotype IB (strain PB1/+).